The primary structure comprises 208 residues: Proheparin-binding EGF-like growth factor (208 aa).

Positions 1-23 (MKLLPSVVLKLFLAAVFSALVTG) are cleaved as a signal peptide. Positions 24 to 62 (ESLERLRRGLADGTSNLVSPTESTDQLLPPGGGRGREVL) are excised as a propeptide. Over 24-161 (ESLERLRRGL…NRLYTYDHTT (138 aa)) the chain is Extracellular. Positions 37 to 49 (TSNLVSPTESTDQ) are enriched in polar residues. Disordered regions lie at residues 37–57 (TSNL…GGGR) and 81–104 (QALA…LGKK). Thr-85 carries O-linked (GalNAc...) threonine glycosylation. A compositionally biased stretch (basic residues) spans 93–102 (KRKKKGKGLG). Residues 104-144 (KRDPCLRKYKDFCIHGECKYVKELRAPSCICHPGYHGERCH) enclose the EGF-like domain. Cystine bridges form between Cys-108/Cys-121, Cys-116/Cys-132, and Cys-134/Cys-143. The propeptide at 149 to 208 (PVKNRLYTYDHTTILAVVAVVLSSVCLLVIVGLLMFRYHRRGGYDVENEEKVKLGVTASH) is C-terminal. A helical transmembrane segment spans residues 162 to 182 (ILAVVAVVLSSVCLLVIVGLL). Residues 183–208 (MFRYHRRGGYDVENEEKVKLGVTASH) lie on the Cytoplasmic side of the membrane.

Interacts with FBLN1. Interacts with EGFR and ERBB4. In terms of processing, O-glycosylated. In terms of tissue distribution, macrophages, midbrain, cerebellum, hypothalamus, cerebral cortex, bulbourethral gland, lung, heart ventricle, kidney, skin, prostate, seminal vesicle, testis; at low levels in lymph node, thymus, spleen; not detected in pituitary, olfactory bulb, thyroid, duodenum, pancreas, liver, submaxillary gland.

It localises to the secreted. Its subcellular location is the extracellular space. The protein resides in the cell membrane. Its function is as follows. Growth factor that mediates its effects via EGFR, ERBB2 and ERBB4. Required for normal cardiac valve formation and normal heart function. Promotes smooth muscle cell proliferation. May be involved in macrophage-mediated cellular proliferation. It is mitogenic for fibroblasts, but not endothelial cells. It is able to bind EGF receptor/EGFR with higher affinity than EGF itself and is a far more potent mitogen for smooth muscle cells than EGF. Also acts as a diphtheria toxin receptor. The sequence is that of Proheparin-binding EGF-like growth factor (HBEGF) from Sus scrofa (Pig).